A 462-amino-acid chain; its full sequence is 3-isopropylmalate dehydratase large subunit (462 aa).

[4Fe-4S] cluster is bound by residues Cys-337, Cys-397, and Cys-400.

It belongs to the aconitase/IPM isomerase family. LeuC type 1 subfamily. As to quaternary structure, heterodimer of LeuC and LeuD. The cofactor is [4Fe-4S] cluster.

It catalyses the reaction (2R,3S)-3-isopropylmalate = (2S)-2-isopropylmalate. Its pathway is amino-acid biosynthesis; L-leucine biosynthesis; L-leucine from 3-methyl-2-oxobutanoate: step 2/4. In terms of biological role, catalyzes the isomerization between 2-isopropylmalate and 3-isopropylmalate, via the formation of 2-isopropylmaleate. In Listeria innocua serovar 6a (strain ATCC BAA-680 / CLIP 11262), this protein is 3-isopropylmalate dehydratase large subunit.